A 75-amino-acid chain; its full sequence is uncharacterized protein (75 aa).

The chain crosses the membrane as a helical span at residues 12 to 32 (LKVFILFTGFTALFYYAMIWV).

The protein resides in the cell membrane. This is an uncharacterized protein from Bacillus subtilis (strain 168).